A 280-amino-acid chain; its full sequence is 2-dehydro-3-deoxyphosphooctonate aldolase 2 (280 aa).

Belongs to the KdsA family.

Its subcellular location is the cytoplasm. The catalysed reaction is D-arabinose 5-phosphate + phosphoenolpyruvate + H2O = 3-deoxy-alpha-D-manno-2-octulosonate-8-phosphate + phosphate. The protein operates within carbohydrate biosynthesis; 3-deoxy-D-manno-octulosonate biosynthesis; 3-deoxy-D-manno-octulosonate from D-ribulose 5-phosphate: step 2/3. It functions in the pathway bacterial outer membrane biogenesis; lipopolysaccharide biosynthesis. This Pseudomonas putida (strain ATCC 47054 / DSM 6125 / CFBP 8728 / NCIMB 11950 / KT2440) protein is 2-dehydro-3-deoxyphosphooctonate aldolase 2 (kdsA2).